Consider the following 276-residue polypeptide: UPF0276 protein PA4106 (276 aa).

Belongs to the UPF0276 family.

In Pseudomonas aeruginosa (strain ATCC 15692 / DSM 22644 / CIP 104116 / JCM 14847 / LMG 12228 / 1C / PRS 101 / PAO1), this protein is UPF0276 protein PA4106.